The sequence spans 179 residues: Dual-action ribosomal maturation protein DarP (179 aa).

The protein belongs to the DarP family.

It is found in the cytoplasm. Its function is as follows. Member of a network of 50S ribosomal subunit biogenesis factors which assembles along the 30S-50S interface, preventing incorrect 23S rRNA structures from forming. Promotes peptidyl transferase center (PTC) maturation. The sequence is that of Dual-action ribosomal maturation protein DarP from Erwinia tasmaniensis (strain DSM 17950 / CFBP 7177 / CIP 109463 / NCPPB 4357 / Et1/99).